Here is a 1322-residue protein sequence, read N- to C-terminus: Mediator of RNA polymerase II transcription subunit 12 (1322 aa).

The interval 1 to 21 (MSPSKYLLTPPEELHPLTDSN) is disordered.

It belongs to the Mediator complex subunit 12 family. In terms of assembly, component of the SRB8-11 complex, which itself associates with the Mediator complex.

It is found in the nucleus. Functionally, component of the SRB8-11 complex. The SRB8-11 complex is a regulatory module of the Mediator complex which is itself involved in regulation of basal and activated RNA polymerase II-dependent transcription. The SRB8-11 complex may be involved in the transcriptional repression of a subset of genes regulated by Mediator. It may inhibit the association of the Mediator complex with RNA polymerase II to form the holoenzyme complex. The polypeptide is Mediator of RNA polymerase II transcription subunit 12 (SRB8) (Kluyveromyces lactis (strain ATCC 8585 / CBS 2359 / DSM 70799 / NBRC 1267 / NRRL Y-1140 / WM37) (Yeast)).